The following is a 160-amino-acid chain: Phosphopantetheine adenylyltransferase (160 aa).

Residue threonine 10 coordinates substrate. ATP is bound by residues 10–11 (TF) and histidine 18. Residues lysine 42, methionine 74, and arginine 88 each coordinate substrate. Residues 89–91 (GVR), glutamate 99, and 124–130 (WSYISST) each bind ATP.

The protein belongs to the bacterial CoaD family. As to quaternary structure, homohexamer. Mg(2+) is required as a cofactor.

The protein resides in the cytoplasm. The catalysed reaction is (R)-4'-phosphopantetheine + ATP + H(+) = 3'-dephospho-CoA + diphosphate. It participates in cofactor biosynthesis; coenzyme A biosynthesis; CoA from (R)-pantothenate: step 4/5. Reversibly transfers an adenylyl group from ATP to 4'-phosphopantetheine, yielding dephospho-CoA (dPCoA) and pyrophosphate. The protein is Phosphopantetheine adenylyltransferase of Sodalis glossinidius (strain morsitans).